The chain runs to 479 residues: Pyruvate kinase (479 aa).

Arg36 provides a ligand contact to substrate. The K(+) site is built by Asn38, Ser40, and Asp70. An ATP-binding site is contributed by 38-41; it reads NFSH. Residues Arg77 and Lys160 each coordinate ATP. Glu225 is a Mg(2+) binding site. Gly251, Asp252, and Thr284 together coordinate substrate. Position 252 (Asp252) interacts with Mg(2+).

The protein belongs to the pyruvate kinase family. In terms of assembly, homotetramer. Mg(2+) serves as cofactor. It depends on K(+) as a cofactor.

It catalyses the reaction pyruvate + ATP = phosphoenolpyruvate + ADP + H(+). The protein operates within carbohydrate degradation; glycolysis; pyruvate from D-glyceraldehyde 3-phosphate: step 5/5. With respect to regulation, allosterically activated by AMP and by several sugar phosphates. Belongs to type II PK. The sequence is that of Pyruvate kinase (pykA) from Buchnera aphidicola subsp. Baizongia pistaciae (strain Bp).